Reading from the N-terminus, the 242-residue chain is 1-(5-phosphoribosyl)-5-[(5-phosphoribosylamino)methylideneamino] imidazole-4-carboxamide isomerase (242 aa).

D8 functions as the Proton acceptor in the catalytic mechanism. D129 (proton donor) is an active-site residue.

The protein belongs to the HisA/HisF family.

The protein resides in the cytoplasm. The enzyme catalyses 1-(5-phospho-beta-D-ribosyl)-5-[(5-phospho-beta-D-ribosylamino)methylideneamino]imidazole-4-carboxamide = 5-[(5-phospho-1-deoxy-D-ribulos-1-ylimino)methylamino]-1-(5-phospho-beta-D-ribosyl)imidazole-4-carboxamide. It participates in amino-acid biosynthesis; L-histidine biosynthesis; L-histidine from 5-phospho-alpha-D-ribose 1-diphosphate: step 4/9. The protein is 1-(5-phosphoribosyl)-5-[(5-phosphoribosylamino)methylideneamino] imidazole-4-carboxamide isomerase of Dictyoglomus thermophilum (strain ATCC 35947 / DSM 3960 / H-6-12).